The sequence spans 316 residues: Ornithine carbamoyltransferase (316 aa).

Carbamoyl phosphate contacts are provided by residues 59-62 (STRT), Gln-86, Arg-110, and 137-140 (HPCQ). Residues Asn-168, Asp-232, and 236-237 (SM) contribute to the L-ornithine site. Carbamoyl phosphate-binding positions include 273 to 274 (CL) and Arg-301.

This sequence belongs to the aspartate/ornithine carbamoyltransferase superfamily. OTCase family.

The protein resides in the cytoplasm. It catalyses the reaction carbamoyl phosphate + L-ornithine = L-citrulline + phosphate + H(+). It participates in amino-acid biosynthesis; L-arginine biosynthesis; L-arginine from L-ornithine and carbamoyl phosphate: step 1/3. Its function is as follows. Reversibly catalyzes the transfer of the carbamoyl group from carbamoyl phosphate (CP) to the N(epsilon) atom of ornithine (ORN) to produce L-citrulline. In Listeria monocytogenes serovar 1/2a (strain ATCC BAA-679 / EGD-e), this protein is Ornithine carbamoyltransferase (argF).